The chain runs to 71 residues: Heat-stable enterotoxin B (71 aa).

The first 19 residues, 1-19 (MKKIILALVLMLFSFCTLG), serve as a signal peptide directing secretion. Residues 20 to 52 (QETASMHLDDTLSAPIAAEINRKACDTQTPSPS) constitute a propeptide that is removed on maturation. Intrachain disulfides connect Cys59-Cys64, Cys60-Cys68, and Cys63-Cys71.

The protein belongs to the heat-stable enterotoxin family.

The protein resides in the secreted. Functionally, toxin which activates the particulate form of guanylate cyclase and increases cyclic GMP levels within the host intestinal epithelial cells. Could play an important role in pathogenesis. In Yersinia enterocolitica, this protein is Heat-stable enterotoxin B (ystB).